A 165-amino-acid chain; its full sequence is K(+)/H(+) antiporter subunit KhtT (165 aa).

The region spanning 76 to 161 is the RCK C-terminal domain; it reads LESIEMAFSD…LKKLIHDFLS (86 aa).

As to quaternary structure, the transporter is composed of the integral membrane protein KhtU and the regulatory protein KhtT.

It is found in the cell membrane. With respect to regulation, binds cyclic di-AMP (c-di-AMP), which may regulate the activity. In terms of biological role, required for activity of the potassium/proton antiporter KhtU. Involved in protection of the cell from methylglyoxal, a toxic by-product of glycolysis. The polypeptide is K(+)/H(+) antiporter subunit KhtT (Bacillus subtilis (strain 168)).